Reading from the N-terminus, the 122-residue chain is Conotoxin flf14.2 (122 aa).

An N-terminal signal peptide occupies residues 1 to 22 (MGFRVLVLIVMVTTSALPFTFS). Positions 23–96 (EESGRSPFRP…AESPVGQKRW (74 aa)) are excised as a propeptide. The segment at 53 to 91 (RADGQPSDMRQPEMRRPEMRRPEVRRPEVRQPEFAESPV) is disordered. A compositionally biased stretch (basic and acidic residues) spans 62–85 (RQPEMRRPEMRRPEVRRPEVRQPE). 2 disulfide bridges follow: C101-C121 and C105-C117.

It belongs to the conotoxin R superfamily. Expressed by the venom duct.

The protein resides in the secreted. This chain is Conotoxin flf14.2, found in Conus anabathrum floridanus (Florida cone).